We begin with the raw amino-acid sequence, 85 residues long: Small ribosomal subunit protein uS17 (85 aa).

It belongs to the universal ribosomal protein uS17 family. As to quaternary structure, part of the 30S ribosomal subunit.

One of the primary rRNA binding proteins, it binds specifically to the 5'-end of 16S ribosomal RNA. The sequence is that of Small ribosomal subunit protein uS17 from Spiroplasma citri.